Here is a 212-residue protein sequence, read N- to C-terminus: 3,4-dihydroxy-2-butanone 4-phosphate synthase (212 aa).

D-ribulose 5-phosphate-binding positions include 37–38, D42, 150–154, and E174; these read RE and RRGHT. E38 serves as a coordination point for Mg(2+). H153 serves as a coordination point for Mg(2+).

The protein belongs to the DHBP synthase family. In terms of assembly, homodimer. Mg(2+) is required as a cofactor. Mn(2+) serves as cofactor.

The catalysed reaction is D-ribulose 5-phosphate = (2S)-2-hydroxy-3-oxobutyl phosphate + formate + H(+). It functions in the pathway cofactor biosynthesis; riboflavin biosynthesis; 2-hydroxy-3-oxobutyl phosphate from D-ribulose 5-phosphate: step 1/1. Functionally, catalyzes the conversion of D-ribulose 5-phosphate to formate and 3,4-dihydroxy-2-butanone 4-phosphate. The protein is 3,4-dihydroxy-2-butanone 4-phosphate synthase of Shewanella halifaxensis (strain HAW-EB4).